Consider the following 396-residue polypeptide: Putative cystathionine beta-lyase (396 aa).

Lys-210 bears the N6-(pyridoxal phosphate)lysine mark.

This sequence belongs to the trans-sulfuration enzymes family. Requires pyridoxal 5'-phosphate as cofactor.

It catalyses the reaction L,L-cystathionine + H2O = L-homocysteine + pyruvate + NH4(+). It carries out the reaction an S-substituted L-cysteine + H2O = a thiol + pyruvate + NH4(+). It participates in amino-acid biosynthesis; L-methionine biosynthesis via de novo pathway; L-homocysteine from L-cystathionine: step 1/1. Its function is as follows. Catalyzes the cleavage of cystathionine to homocysteine, pyruvate and ammonia during methionine biosynthesis. The chain is Putative cystathionine beta-lyase (metC) from Rhizobium johnstonii (strain DSM 114642 / LMG 32736 / 3841) (Rhizobium leguminosarum bv. viciae).